The following is a 441-amino-acid chain: UDP-N-acetylmuramoylalanine--D-glutamate ligase (441 aa).

112 to 118 (GTNGKTT) serves as a coordination point for ATP.

The protein belongs to the MurCDEF family.

The protein localises to the cytoplasm. The catalysed reaction is UDP-N-acetyl-alpha-D-muramoyl-L-alanine + D-glutamate + ATP = UDP-N-acetyl-alpha-D-muramoyl-L-alanyl-D-glutamate + ADP + phosphate + H(+). The protein operates within cell wall biogenesis; peptidoglycan biosynthesis. Functionally, cell wall formation. Catalyzes the addition of glutamate to the nucleotide precursor UDP-N-acetylmuramoyl-L-alanine (UMA). The protein is UDP-N-acetylmuramoylalanine--D-glutamate ligase of Gloeobacter violaceus (strain ATCC 29082 / PCC 7421).